The sequence spans 348 residues: MHGQKNISERYQKFKEMEGTGKIVCVTGGAGYLASWLIMRLLERGYSVRTTVRSDPKFREDVSHLKALPEATEKLQIFEADLENPESFDDAINGCVGVFLVAQGMNFAEEYTLEKIIKTCVEGTLRILQSCLKSKTVKKVVYTSSADAAMMISNLKAVKEIDETIWSEVDNFISKPEQVIPGLPSYVVSKVLTERACLKFSEEHGLDVVTILPPLVVGPFITPHPPPSVSIALSIISGDVSMMLGVRLENAVHIDDVALAHIFVFECEKAKGRHICSSVDFPMHDLPKFISENYPEFNVPTDLLKDIEEQEPVHLSSDKLLSMGFQFKYDFAEIFGDAIRCAKEKGFL.

Belongs to the NAD(P)-dependent epimerase/dehydratase family.

It carries out the reaction narcotine hemiacetal + NAD(+) = noscapine + NADH + H(+). It functions in the pathway alkaloid biosynthesis. Functionally, oxidoreductase that catalyzes the last step in the biosynthesis of the benzylisoquinoline alkaloid noscapine. Converts narcotine hemiacetal to noscapine. The polypeptide is Noscapine synthase SDR1 (Papaver somniferum (Opium poppy)).